A 144-amino-acid chain; its full sequence is Eukaryotic translation initiation factor 1A, X-chromosomal (144 aa).

A compositionally biased stretch (basic residues) spans Met1–Gly15. 2 disordered regions span residues Met1–Leu26 and Lys114–Ile144. Residues Lys16–Leu26 are compositionally biased toward basic and acidic residues. Positions Glu22–Asn96 constitute an S1-like domain. A compositionally biased stretch (acidic residues) spans Gly124–Ile144.

Belongs to the eIF-1A family. In terms of assembly, component of the 43S pre-initiation complex (43S PIC), which is composed of the 40S ribosomal subunit, EIF1, eIF1A (EIF1AX), eIF3 complex, EIF5 and eIF2-GTP-initiator tRNA complex (eIF2 ternary complex). Interacts with EIF5; this interaction contributes to the maintenance of EIF1 within the open 43S PIC. Interacts through its C-terminal domain (CTD) with the CTD of EIF5B; from the location of the start codon by the 43S complex until the formation of the 80S complex. As to quaternary structure, (Microbial infection) Interacts with human respiratory syncytial virus (HRSV) nucleoprotein; this interaction recruits EIF1AX to the viral replication complex to facilitate viral genomic RNA synthesis and virus production.

The protein localises to the cytoplasm. Component of the 43S pre-initiation complex (43S PIC), which binds to the mRNA cap-proximal region, scans mRNA 5'-untranslated region, and locates the initiation codon. This protein enhances formation of the cap-proximal complex. Together with EIF1, facilitates scanning, start codon recognition, promotion of the assembly of 48S complex at the initiation codon (43S PIC becomes 48S PIC after the start codon is reached), and dissociation of aberrant complexes. After start codon location, together with EIF5B orients the initiator methionine-tRNA in a conformation that allows 60S ribosomal subunit joining to form the 80S initiation complex. Is released after 80S initiation complex formation, just after GTP hydrolysis by EIF5B, and before release of EIF5B. Its globular part is located in the A site of the 40S ribosomal subunit. Its interaction with EIF5 during scanning contribute to the maintenance of EIF1 within the open 43S PIC. In contrast to yeast orthologs, does not bind EIF1. This chain is Eukaryotic translation initiation factor 1A, X-chromosomal (EIF1AX), found in Homo sapiens (Human).